The sequence spans 601 residues: Elongation factor 4 (601 aa).

The region spanning 7–189 (SNVRNFSIVA…AIVTRLPPPK (183 aa)) is the tr-type G domain. GTP contacts are provided by residues 19 to 24 (DHGKST) and 136 to 139 (NKVD).

The protein belongs to the TRAFAC class translation factor GTPase superfamily. Classic translation factor GTPase family. LepA subfamily.

It is found in the cell inner membrane. The catalysed reaction is GTP + H2O = GDP + phosphate + H(+). Its function is as follows. Required for accurate and efficient protein synthesis under certain stress conditions. May act as a fidelity factor of the translation reaction, by catalyzing a one-codon backward translocation of tRNAs on improperly translocated ribosomes. Back-translocation proceeds from a post-translocation (POST) complex to a pre-translocation (PRE) complex, thus giving elongation factor G a second chance to translocate the tRNAs correctly. Binds to ribosomes in a GTP-dependent manner. This is Elongation factor 4 from Afipia carboxidovorans (strain ATCC 49405 / DSM 1227 / KCTC 32145 / OM5) (Oligotropha carboxidovorans).